Consider the following 272-residue polypeptide: Cerberus (272 aa).

Positions 1 to 17 are cleaved as a signal peptide; sequence MHLLLVQLLVLLPLGKA. Intrachain disulfides connect Cys162/Cys209, Cys176/Cys223, Cys186/Cys239, and Cys190/Cys241. The CTCK domain occupies 162–246; it reads CRTVPFNQTI…EECQCMVKTE (85 aa). N-linked (GlcNAc...) asparagine glycans are attached at residues Asn168 and Asn222.

The protein belongs to the DAN family. In terms of assembly, forms monomers and predominantly dimers. In terms of processing, N-glycosylated.

It localises to the secreted. Its function is as follows. Cytokine that may play a role in anterior neural induction and somite formation during embryogenesis in part, through a BMP-inhibitory mechanism. Can regulate Nodal signaling during gastrulation as well as the formation and patterning of the primitive streak. In Mus musculus (Mouse), this protein is Cerberus (Cer1).